The following is a 117-amino-acid chain: Putative membrane protein insertion efficiency factor (117 aa).

It belongs to the UPF0161 family.

It is found in the cell inner membrane. Its function is as follows. Could be involved in insertion of integral membrane proteins into the membrane. The sequence is that of Putative membrane protein insertion efficiency factor from Bartonella bacilliformis (strain ATCC 35685 / KC583 / Herrer 020/F12,63).